We begin with the raw amino-acid sequence, 96 residues long: MSRVCELTGKGVQTGNNVSHANNKTKRRFLPNLCQVTLISDALGQRFRLRVSAAALRSVEHRGGLDAFLLKSGENELSMRARLLRRQIAKKTAEAA.

This sequence belongs to the bacterial ribosomal protein bL28 family.

The sequence is that of Large ribosomal subunit protein bL28 from Agrobacterium fabrum (strain C58 / ATCC 33970) (Agrobacterium tumefaciens (strain C58)).